A 307-amino-acid polypeptide reads, in one-letter code: Elongation factor Ts (307 aa).

The interval 80–83 (TDFV) is involved in Mg(2+) ion dislocation from EF-Tu.

The protein belongs to the EF-Ts family.

It is found in the cytoplasm. In terms of biological role, associates with the EF-Tu.GDP complex and induces the exchange of GDP to GTP. It remains bound to the aminoacyl-tRNA.EF-Tu.GTP complex up to the GTP hydrolysis stage on the ribosome. This is Elongation factor Ts from Clostridium botulinum (strain 657 / Type Ba4).